A 355-amino-acid chain; its full sequence is Peptide chain release factor 1 (355 aa).

The residue at position 230 (Gln230) is an N5-methylglutamine.

It belongs to the prokaryotic/mitochondrial release factor family. In terms of processing, methylated by PrmC. Methylation increases the termination efficiency of RF1.

It localises to the cytoplasm. Peptide chain release factor 1 directs the termination of translation in response to the peptide chain termination codons UAG and UAA. The sequence is that of Peptide chain release factor 1 from Geobacter sulfurreducens (strain ATCC 51573 / DSM 12127 / PCA).